Consider the following 253-residue polypeptide: Ribonuclease HII (253 aa).

In terms of domain architecture, RNase H type-2 spans 70–253 (NLIAGIDEVG…KSFEPIKSML (184 aa)). A divalent metal cation-binding residues include D76, E77, and D168.

Belongs to the RNase HII family. Mn(2+) is required as a cofactor. Mg(2+) serves as cofactor.

Its subcellular location is the cytoplasm. The catalysed reaction is Endonucleolytic cleavage to 5'-phosphomonoester.. In terms of biological role, endonuclease that specifically degrades the RNA of RNA-DNA hybrids. The chain is Ribonuclease HII from Streptococcus agalactiae serotype Ia (strain ATCC 27591 / A909 / CDC SS700).